Consider the following 873-residue polypeptide: Coatomer subunit gamma-2 (873 aa).

Residues Met-1 to Glu-11 are compositionally biased toward basic and acidic residues. Residues Met-1–Asn-21 are disordered. 6 HEAT repeats span residues Thr-64–Asp-101, Arg-283–Ser-320, Ala-321–Ser-355, Ser-356–Arg-392, His-394–Glu-430, and Pro-467–Asp-504.

It belongs to the COPG family. In terms of assembly, oligomeric complex.

It is found in the cytoplasm. Its subcellular location is the golgi apparatus membrane. The protein resides in the cytoplasmic vesicle. The protein localises to the COPI-coated vesicle membrane. In terms of biological role, the coatomer is a cytosolic protein complex that binds to dilysine motifs and reversibly associates with Golgi non-clathrin-coated vesicles, which further mediate biosynthetic protein transport from the ER, via the Golgi up to the trans Golgi network. Coatomer complex is required for budding from Golgi membranes, and is essential for the retrograde Golgi-to-ER transport of dilysine-tagged proteins. The polypeptide is Coatomer subunit gamma-2 (copg2) (Takifugu rubripes (Japanese pufferfish)).